The chain runs to 662 residues: Translation factor GUF1, mitochondrial (662 aa).

The transit peptide at 1–28 (MYIHSSRTVLARYGSRTPLLRPSVLGRY) directs the protein to the mitochondrion. Residues 62-244 (ENYRNFSIVA…AIVDHIPAPD (183 aa)) enclose the tr-type G domain. GTP-binding positions include 71 to 78 (AHVDHGKS), 137 to 141 (DTPGH), and 191 to 194 (NKID).

Belongs to the TRAFAC class translation factor GTPase superfamily. Classic translation factor GTPase family. LepA subfamily.

It localises to the mitochondrion inner membrane. It catalyses the reaction GTP + H2O = GDP + phosphate + H(+). In terms of biological role, promotes mitochondrial protein synthesis. May act as a fidelity factor of the translation reaction, by catalyzing a one-codon backward translocation of tRNAs on improperly translocated ribosomes. Binds to mitochondrial ribosomes in a GTP-dependent manner. This chain is Translation factor GUF1, mitochondrial, found in Meyerozyma guilliermondii (strain ATCC 6260 / CBS 566 / DSM 6381 / JCM 1539 / NBRC 10279 / NRRL Y-324) (Yeast).